An 83-amino-acid polypeptide reads, in one-letter code: Mu-theraphotoxin-Hhn2j 1 (83 aa).

Positions 1-21 are cleaved as a signal peptide; the sequence is MKASMFLALAGLVLLFVVGYA. The propeptide occupies 22-48; sequence SESEEKEFPIELLSKIFAVDVFKGEER. Cystine bridges form between Cys50-Cys65, Cys57-Cys70, and Cys64-Cys77. Leu81 is subject to Leucine amide.

It belongs to the neurotoxin 10 (Hwtx-1) family. 15 (Hntx-3) subfamily. In terms of assembly, monomer. As to expression, expressed by the venom gland.

The protein resides in the secreted. Its function is as follows. Lethal neurotoxin. Selectively blocks tetrodotoxin-sensitive voltage-gated sodium channels (Nav). Does not affect tetrodotoxin-resistant voltage-gated sodium channels or calcium channels. This Cyriopagopus hainanus (Chinese bird spider) protein is Mu-theraphotoxin-Hhn2j 1.